We begin with the raw amino-acid sequence, 729 residues long: MRSVVLVALAAAIGNMLQGWDNATIAGAVIYIKKEFHLEKEPKIEGLIVAMSLIGATLITTFSGPVSDKVGRRSMLILSSVLYFLSSIVMFWSPNVYVLLFARLLDGFGIGLAVTLVPIYISETAPSEIRGLLNTFPQFCGSGGMFLSYCLVFGMSLQESPSWRLMLGVLSIPSIAYFVLAAFFLPESPRWLVSKGRMDEARQVLQRLRGREDVSGELALLVEGLGVGKDTSIEEYVIGPDNEENEGGNELPRKDQIKLYGPEDGQSWMAKPVKGQSSLALASRQGSMLPRGGSLMDPLVTLFGSIHENLPSENMNASSRSMLFPNMGSILGMMGRQESQWDPERNNEDSSDQDENLNSPLLSPQTTEPDDYHQRTVGTMHRRQSSLFMANVGETATATSIGGGWQLAWKYNDKVGADGKRVNGGLQRMYIHEETANNNTNNIPFSRRGSLLSFHPEGDGHDQVNGYVQAAALVSQASMMPGGKGETAMLPKEVKDGPGWRELKEPGVKRALMVGVGLQILQQFAGINGVMYYTPQILEETGVSSLLTNLGISAESASLLISALTTLLMLPCILVSMRSLMLSTIPILILSLVTLVIGSLVNLGGSINALISTASVTVYLSCFVMGFGAIPNILCSEIFPTSVRGLCITICALTFWICDIIVTYTLPVMLKSIGIAGVFGIYAIVCAVAWVFVYLKVPETKGMPLEVISEFFSVGAKQQDAAASFLSDG.

The next 6 membrane-spanning stretches (helical) occupy residues 5–25 (VLVA…NATI), 46–66 (GLIV…SGPV), 81–101 (VLYF…VLLF), 104–124 (LLDG…ISET), 135–155 (TFPQ…VFGM), and 165–185 (LMLG…AFFL). Residues 337–372 (QESQWDPERNNEDSSDQDENLNSPLLSPQTTEPDDY) are disordered. Over residues 356–367 (NLNSPLLSPQTT) the composition is skewed to polar residues. The residue at position 446 (serine 446) is a Phosphoserine. Transmembrane regions (helical) follow at residues 511–531 (ALMV…NGVM), 557–577 (ASLL…LVSM), 581–601 (MLST…GSLV), 610–630 (LIST…FGAI), 650–670 (ICAL…PVML), and 673–693 (IGIA…WVFV).

Belongs to the major facilitator superfamily. Sugar transporter (TC 2.A.1.1) family. As to expression, weakly expressed.

It is found in the vacuole membrane. The enzyme catalyses D-glucose(out) + H(+)(in) = D-glucose(in) + H(+)(out). It carries out the reaction sucrose(out) + H(+)(in) = sucrose(in) + H(+)(out). Sugar proton-coupled antiporter which contributes to vacuolar sugar import (e.g. monosaccharides including glucose,sucrose and fructose), particularly during stress responses (e.g. in response to cold). In Arabidopsis thaliana (Mouse-ear cress), this protein is Monosaccharide-sensing protein 3.